Consider the following 152-residue polypeptide: Endoribonuclease YbeY (152 aa).

3 residues coordinate Zn(2+): histidine 111, histidine 115, and histidine 121.

This sequence belongs to the endoribonuclease YbeY family. Zn(2+) is required as a cofactor.

Its subcellular location is the cytoplasm. Functionally, single strand-specific metallo-endoribonuclease involved in late-stage 70S ribosome quality control and in maturation of the 3' terminus of the 16S rRNA. The sequence is that of Endoribonuclease YbeY from Pseudomonas fluorescens (strain ATCC BAA-477 / NRRL B-23932 / Pf-5).